The chain runs to 287 residues: Diphthine methyl ester synthase (287 aa).

S-adenosyl-L-methionine contacts are provided by residues L9, D84, G87, 112 to 113 (SI), V163, V221, and H248.

It belongs to the diphthine synthase family.

It localises to the cytoplasm. The enzyme catalyses 2-[(3S)-amino-3-carboxypropyl]-L-histidyl-[translation elongation factor 2] + 4 S-adenosyl-L-methionine = diphthine methyl ester-[translation elongation factor 2] + 4 S-adenosyl-L-homocysteine + 3 H(+). The protein operates within protein modification; peptidyl-diphthamide biosynthesis. Functionally, S-adenosyl-L-methionine-dependent methyltransferase that catalyzes four methylations of the modified target histidine residue in translation elongation factor 2 (EF-2), to form an intermediate called diphthine methyl ester. The four successive methylation reactions represent the second step of diphthamide biosynthesis. The polypeptide is Diphthine methyl ester synthase (DPH5) (Gibberella zeae (strain ATCC MYA-4620 / CBS 123657 / FGSC 9075 / NRRL 31084 / PH-1) (Wheat head blight fungus)).